The primary structure comprises 68 residues: Large ribosomal subunit protein uL29 (68 aa).

The protein belongs to the universal ribosomal protein uL29 family.

The sequence is that of Large ribosomal subunit protein uL29 from Nitrobacter winogradskyi (strain ATCC 25391 / DSM 10237 / CIP 104748 / NCIMB 11846 / Nb-255).